The chain runs to 299 residues: Bifunctional protein FolD (299 aa).

NADP(+)-binding positions include 168–170 (GRS), serine 193, and isoleucine 234.

This sequence belongs to the tetrahydrofolate dehydrogenase/cyclohydrolase family. As to quaternary structure, homodimer.

It carries out the reaction (6R)-5,10-methylene-5,6,7,8-tetrahydrofolate + NADP(+) = (6R)-5,10-methenyltetrahydrofolate + NADPH. The enzyme catalyses (6R)-5,10-methenyltetrahydrofolate + H2O = (6R)-10-formyltetrahydrofolate + H(+). It functions in the pathway one-carbon metabolism; tetrahydrofolate interconversion. In terms of biological role, catalyzes the oxidation of 5,10-methylenetetrahydrofolate to 5,10-methenyltetrahydrofolate and then the hydrolysis of 5,10-methenyltetrahydrofolate to 10-formyltetrahydrofolate. The sequence is that of Bifunctional protein FolD from Brucella anthropi (strain ATCC 49188 / DSM 6882 / CCUG 24695 / JCM 21032 / LMG 3331 / NBRC 15819 / NCTC 12168 / Alc 37) (Ochrobactrum anthropi).